Reading from the N-terminus, the 284-residue chain is Thymidylate synthase (284 aa).

Position 34 (Arg34) interacts with dUMP. His64 contributes to the (6R)-5,10-methylene-5,6,7,8-tetrahydrofolate binding site. 139–140 contributes to the dUMP binding site; the sequence is RR. The Nucleophile role is filled by Cys159. Residues 186–189, Asn197, and 227–229 each bind dUMP; these read RSAD and HIY. Asp189 lines the (6R)-5,10-methylene-5,6,7,8-tetrahydrofolate pocket. Ala283 is a binding site for (6R)-5,10-methylene-5,6,7,8-tetrahydrofolate.

Belongs to the thymidylate synthase family. Bacterial-type ThyA subfamily. As to quaternary structure, homodimer.

It is found in the cytoplasm. It carries out the reaction dUMP + (6R)-5,10-methylene-5,6,7,8-tetrahydrofolate = 7,8-dihydrofolate + dTMP. Its pathway is pyrimidine metabolism; dTTP biosynthesis. Functionally, catalyzes the reductive methylation of 2'-deoxyuridine-5'-monophosphate (dUMP) to 2'-deoxythymidine-5'-monophosphate (dTMP) while utilizing 5,10-methylenetetrahydrofolate (mTHF) as the methyl donor and reductant in the reaction, yielding dihydrofolate (DHF) as a by-product. This enzymatic reaction provides an intracellular de novo source of dTMP, an essential precursor for DNA biosynthesis. This chain is Thymidylate synthase, found in Polaromonas sp. (strain JS666 / ATCC BAA-500).